Here is a 930-residue protein sequence, read N- to C-terminus: Dual serine/threonine and tyrosine protein kinase (930 aa).

Positions 383–428 (RKENELYESLMNIANRKQEEMKDMIIETLSNMKEELLEDAANMEFK) form a coiled coil. Positions 653–907 (PKLGRELGRG…PLLGIVQPML (255 aa)) constitute a Protein kinase domain. Residues 659–667 (LGRGQYGVV) and Lys682 contribute to the ATP site. Asp778 (proton acceptor) is an active-site residue.

This sequence belongs to the protein kinase superfamily. Ser/Thr protein kinase family. Widely expressed with the highest expression in brain and ovary.

The protein resides in the cytoplasm. It localises to the cell membrane. Its subcellular location is the apical cell membrane. It is found in the basolateral cell membrane. The protein localises to the cell junction. It catalyses the reaction L-seryl-[protein] + ATP = O-phospho-L-seryl-[protein] + ADP + H(+). The enzyme catalyses L-threonyl-[protein] + ATP = O-phospho-L-threonyl-[protein] + ADP + H(+). The catalysed reaction is L-tyrosyl-[protein] + ATP = O-phospho-L-tyrosyl-[protein] + ADP + H(+). May act as a positive regulator of ERK phosphorylation downstream of fibroblast growth factor-receptor activation. May induce both caspase-dependent apoptosis and caspase-independent cell death. This is Dual serine/threonine and tyrosine protein kinase (DSTYK) from Gallus gallus (Chicken).